Consider the following 452-residue polypeptide: Tubulin alpha-2/alpha-4 chain (452 aa).

Residue glutamine 11 participates in GTP binding. Lysine 40 bears the N6-acetyllysine mark. Residues glutamate 71, serine 140, glycine 144, threonine 145, threonine 179, asparagine 206, and asparagine 228 each coordinate GTP. Residue glutamate 71 coordinates Mg(2+). Glutamate 254 is an active-site residue. The tract at residues 432–452 (YEEVGVDSVEGEGEEEGGEEY) is disordered.

It belongs to the tubulin family. In terms of assembly, dimer of alpha and beta chains. A typical microtubule is a hollow water-filled tube with an outer diameter of 25 nm and an inner diameter of 15 nM. Alpha-beta heterodimers associate head-to-tail to form protofilaments running lengthwise along the microtubule wall with the beta-tubulin subunit facing the microtubule plus end conferring a structural polarity. Microtubules usually have 13 protofilaments but different protofilament numbers can be found in some organisms and specialized cells. The cofactor is Mg(2+). Undergoes a tyrosination/detyrosination cycle, the cyclic removal and re-addition of a C-terminal tyrosine residue by the enzymes tubulin tyrosine carboxypeptidase (TTCP) and tubulin tyrosine ligase (TTL), respectively. In terms of processing, acetylation of alpha chains at Lys-40 stabilizes microtubules and affects affinity and processivity of microtubule motors. This modification has a role in multiple cellular functions, ranging from cell motility, cell cycle progression or cell differentiation to intracellular trafficking and signaling.

The protein localises to the cytoplasm. It is found in the cytoskeleton. The catalysed reaction is GTP + H2O = GDP + phosphate + H(+). In terms of biological role, tubulin is the major constituent of microtubules, a cylinder consisting of laterally associated linear protofilaments composed of alpha- and beta-tubulin heterodimers. Microtubules grow by the addition of GTP-tubulin dimers to the microtubule end, where a stabilizing cap forms. Below the cap, tubulin dimers are in GDP-bound state, owing to GTPase activity of alpha-tubulin. This Patella vulgata (Common limpet) protein is Tubulin alpha-2/alpha-4 chain (TUB2).